The chain runs to 396 residues: Major outer membrane porin, serovar A (396 aa).

The first 22 residues, 1–22 (MKKLLKSVLVFAALSSASSLQA), serve as a signal peptide directing secretion.

Belongs to the chlamydial porin (CP) (TC 1.B.2) family. Part of a disulfide cross-linked outer membrane complex (COMC) composed of the major outer membrane porin (MOMP), the small cysteine-rich protein (OmcA) and the large cysteine-rich periplasmic protein (OmcB).

The protein resides in the cell outer membrane. In terms of biological role, in elementary bodies (EBs, the infectious stage, which is able to survive outside the host cell) provides the structural integrity of the outer envelope through disulfide cross-links with the small cysteine-rich protein and the large cysteine-rich periplasmic protein. It has been described in publications as the Sarkosyl-insoluble COMC (Chlamydia outer membrane complex), and serves as the functional equivalent of peptidoglycan. Functionally, permits diffusion of specific solutes through the outer membrane. The polypeptide is Major outer membrane porin, serovar A (ompA) (Chlamydia trachomatis).